The primary structure comprises 1020 residues: Mediator of RNA polymerase II transcription subunit 16 (1020 aa).

It belongs to the Mediator complex subunit 16 family. As to quaternary structure, component of the Mediator complex.

Its subcellular location is the nucleus. Component of the Mediator complex, a coactivator involved in the regulated transcription of nearly all RNA polymerase II-dependent genes. Mediator functions as a bridge to convey information from gene-specific regulatory proteins to the basal RNA polymerase II transcription machinery. Mediator is recruited to promoters by direct interactions with regulatory proteins and serves as a scaffold for the assembly of a functional preinitiation complex with RNA polymerase II and the general transcription factors. This is Mediator of RNA polymerase II transcription subunit 16 (SIN4) from Scheffersomyces stipitis (strain ATCC 58785 / CBS 6054 / NBRC 10063 / NRRL Y-11545) (Yeast).